The sequence spans 249 residues: Isoamyl acetate-hydrolyzing esterase 1 homolog (249 aa).

Catalysis depends on Ser-24, which acts as the Nucleophile. Lys-63 is modified (N6-succinyllysine). The active-site Proton donor is the Asp-197. The active-site Proton acceptor is His-200.

This sequence belongs to the 'GDSL' lipolytic enzyme family. IAH1 subfamily.

Functionally, probable lipase. The sequence is that of Isoamyl acetate-hydrolyzing esterase 1 homolog (IAH1) from Bos taurus (Bovine).